The sequence spans 218 residues: MSLGLIGRKVGMTRLFTDEGEAIPVTVIDVSDNRVAQIKTQATNGYDAIQLAHGTRRATRVTKAMAGHFAKAGVMAGNALNEFHLDAAKIAEMTPGQVIPAETAFTAGQKVDVQGVTIGKGYAGTIKRYHFASGRASHGNSRSHNVPGSIGMAQDPGRVFPGKRMTGHLGDITRTVQNLVIARIDAERNLIMVKGAIPGAPGGKVIVTPAVKTPLKKK.

The tract at residues 134–154 is disordered; that stretch reads GRASHGNSRSHNVPGSIGMAQ. Gln-154 is modified (N5-methylglutamine).

Belongs to the universal ribosomal protein uL3 family. As to quaternary structure, part of the 50S ribosomal subunit. Forms a cluster with proteins L14 and L19. Methylated by PrmB.

In terms of biological role, one of the primary rRNA binding proteins, it binds directly near the 3'-end of the 23S rRNA, where it nucleates assembly of the 50S subunit. This is Large ribosomal subunit protein uL3 from Polynucleobacter necessarius subsp. necessarius (strain STIR1).